Here is a 548-residue protein sequence, read N- to C-terminus: uncharacterized protein (548 aa).

2 short-chain dehydrogenase/reductase regions span residues 1 to 250 (MDDR…WMSV) and 271 to 548 (PVED…LLSP). An NADP(+)-binding site is contributed by 12–37 (IVVTGAAGGIGRALVDIFAANGDVVV). Serine 141 contacts substrate. The active-site Proton acceptor is tyrosine 154. 280 to 304 (VIVMGGATGVGAAIARRFAENGDTV) serves as a coordination point for NADP(+). The active-site Proton acceptor is tyrosine 420.

Belongs to the short-chain dehydrogenases/reductases (SDR) family.

This is an uncharacterized protein from Sinorhizobium fredii (strain NBRC 101917 / NGR234).